Reading from the N-terminus, the 477-residue chain is Asparaginyl-tRNA synthetase (477 aa).

Residues 1–14 constitute a mitochondrion transit peptide; the sequence is MLGVRCLLRSVRFC. Lys353 carries the post-translational modification N6-acetyllysine.

The protein belongs to the class-II aminoacyl-tRNA synthetase family. In terms of assembly, homodimer.

The protein localises to the mitochondrion matrix. The protein resides in the mitochondrion. The enzyme catalyses tRNA(Asn) + L-asparagine + ATP = L-asparaginyl-tRNA(Asn) + AMP + diphosphate + H(+). Functionally, mitochondrial aminoacyl-tRNA synthetase that catalyzes the specific attachment of the asparagine amino acid (aa) to the homologous transfer RNA (tRNA), further participating in protein synthesis. The reaction occurs in a two steps: asparagine is first activated by ATP to form Asn-AMP and then transferred to the acceptor end of tRNA(Asn). The chain is Asparaginyl-tRNA synthetase from Homo sapiens (Human).